The sequence spans 139 residues: MSPTLRLTISTPASLLVNAQAIVALRAEDGSGSFGILPGHADFLTVLTPCVLRWRGTENIRRFCAVEEGVLRVSEGHSVTIACRSGMLGDSLAALEAQIETARARTLDTARNARVEQTRLHAQAVRQLLRYLRPSRGDA.

Belongs to the ATPase epsilon chain family. In terms of assembly, F-type ATPases have 2 components, CF(1) - the catalytic core - and CF(0) - the membrane proton channel. CF(1) has five subunits: alpha(3), beta(3), gamma(1), delta(1), epsilon(1). CF(0) has three main subunits: a, b and c.

It localises to the cell inner membrane. In terms of biological role, produces ATP from ADP in the presence of a proton gradient across the membrane. The sequence is that of ATP synthase epsilon chain 2 from Paraburkholderia xenovorans (strain LB400).